An 86-amino-acid polypeptide reads, in one-letter code: Small muscular protein (86 aa).

Positions 20-64 (MGAFRPGAGQPPRRKECTPEIEEGAPPTSDEEKKPIPGAKKLPGP) are disordered.

This sequence belongs to the SMPX family.

Plays a role in the regulatory network through which muscle cells coordinate their structural and functional states during growth, adaptation, and repair. The sequence is that of Small muscular protein (SMPX) from Bos taurus (Bovine).